The primary structure comprises 130 residues: Small ribosomal subunit protein uS8 (130 aa).

It belongs to the universal ribosomal protein uS8 family. As to quaternary structure, part of the 30S ribosomal subunit. Contacts proteins S5 and S12.

In terms of biological role, one of the primary rRNA binding proteins, it binds directly to 16S rRNA central domain where it helps coordinate assembly of the platform of the 30S subunit. The sequence is that of Small ribosomal subunit protein uS8 from Alteromonas mediterranea (strain DSM 17117 / CIP 110805 / LMG 28347 / Deep ecotype).